We begin with the raw amino-acid sequence, 192 residues long: Signal peptidase complex subunit 2 (192 aa).

Residues 1-46 (MEEKKTESTNKNVKKANLLDHHSIKHILDESVSDIVTSRGYKEDVR) lie on the Cytoplasmic side of the membrane. A helical membrane pass occupies residues 47-69 (LSNLKLILGTIIIVVALVAQFYN). Topologically, residues 70–78 (KKFPENRDF) are lumenal. A helical membrane pass occupies residues 79–98 (LIGCIALYVVLNAVLQLILY). The Cytoplasmic segment spans residues 99–192 (TKEKNAILFT…YAEEEPKKKK (94 aa)).

It belongs to the SPCS2 family. In terms of assembly, component of the signal peptidase complex (SPC) composed of a catalytic subunit SEC11 and three accessory subunits SPCS1, SPCS2 and SPCS3. The complex induces a local thinning of the ER membrane which is used to measure the length of the signal peptide (SP) h-region of protein substrates. This ensures the selectivity of the complex towards h-regions shorter than 18-20 amino acids.

It localises to the endoplasmic reticulum membrane. Functionally, component of the signal peptidase complex (SPC) which catalyzes the cleavage of N-terminal signal sequences from nascent proteins as they are translocated into the lumen of the endoplasmic reticulum. Enhances the enzymatic activity of SPC and facilitates the interactions between different components of the translocation site. In Arabidopsis thaliana (Mouse-ear cress), this protein is Signal peptidase complex subunit 2.